Here is a 449-residue protein sequence, read N- to C-terminus: Heterogeneous nuclear ribonucleoprotein H2 (449 aa).

Met1 carries the post-translational modification N-acetylmethionine. Met2 carries the N-acetylmethionine; in Heterogeneous nuclear ribonucleoprotein H2, N-terminally processed modification. One can recognise an RRM 1 domain in the interval Phe11–Ser90. Ser23 bears the Phosphoserine mark. Residue Lys35 forms a Glycyl lysine isopeptide (Lys-Gly) (interchain with G-Cter in SUMO2) linkage. A phosphoserine mark is found at Ser54 and Ser63. Residue Lys87 forms a Glycyl lysine isopeptide (Lys-Gly) (interchain with G-Cter in SUMO2) linkage. Ser90 is subject to Phosphoserine. Lys98 is covalently cross-linked (Glycyl lysine isopeptide (Lys-Gly) (interchain with G-Cter in SUMO2)). Residues Gly111–Arg188 form the RRM 2 domain. Arg233 carries the dimethylated arginine; alternate modification. Omega-N-methylarginine; alternate is present on Arg233. Residues Gly234–Tyr249 form a 1-1 repeat. Positions Gly234–Tyr433 are 2 X 16 AA Gly-rich approximate repeats. The residue at position 246 (Tyr246) is a Phosphotyrosine. One can recognise an RRM 3 domain in the interval His289–Thr364. Ser310 is modified (phosphoserine). Repeat copies occupy residues His354–Tyr372, His374–Tyr392, and Ala418–Tyr433. Positions His354 to Tyr392 are 2 X 19 AA perfect repeats.

As to quaternary structure, component of a ribonucleoprotein complex containing mRNAs and RNA-binding proteins including DDX5, HNRNPH2 and SRSF1 as well as splicing regulator ARVCF. Interacts with TXNL4/DIM1.

The protein resides in the nucleus. It localises to the nucleoplasm. This protein is a component of the heterogeneous nuclear ribonucleoprotein (hnRNP) complexes which provide the substrate for the processing events that pre-mRNAs undergo before becoming functional, translatable mRNAs in the cytoplasm. Binds poly(RG). This chain is Heterogeneous nuclear ribonucleoprotein H2 (Hnrnph2), found in Rattus norvegicus (Rat).